A 178-amino-acid chain; its full sequence is ATP synthase subunit b, chloroplastic (178 aa).

A helical transmembrane segment spans residues 34–50 (LAILTGGIFYLGSNALS).

This sequence belongs to the ATPase B chain family. As to quaternary structure, F-type ATPases have 2 components, F(1) - the catalytic core - and F(0) - the membrane proton channel. F(1) has five subunits: alpha(3), beta(3), gamma(1), delta(1), epsilon(1). F(0) has four main subunits: a(1), b(1), b'(1) and c(10-14). The alpha and beta chains form an alternating ring which encloses part of the gamma chain. F(1) is attached to F(0) by a central stalk formed by the gamma and epsilon chains, while a peripheral stalk is formed by the delta, b and b' chains.

The protein localises to the plastid. Its subcellular location is the chloroplast thylakoid membrane. In terms of biological role, f(1)F(0) ATP synthase produces ATP from ADP in the presence of a proton or sodium gradient. F-type ATPases consist of two structural domains, F(1) containing the extramembraneous catalytic core and F(0) containing the membrane proton channel, linked together by a central stalk and a peripheral stalk. During catalysis, ATP synthesis in the catalytic domain of F(1) is coupled via a rotary mechanism of the central stalk subunits to proton translocation. Component of the F(0) channel, it forms part of the peripheral stalk, linking F(1) to F(0). This is ATP synthase subunit b, chloroplastic from Ochrosphaera neapolitana.